Here is a 72-residue protein sequence, read N- to C-terminus: BBSome-interacting protein 1 (72 aa).

Belongs to the BBIP10 family.

The protein localises to the cell projection. Its subcellular location is the cilium. It localises to the cytoplasm. Its function is as follows. Required for primary cilia assembly. In Danio rerio (Zebrafish), this protein is BBSome-interacting protein 1 (bbip1).